We begin with the raw amino-acid sequence, 302 residues long: Sulfate adenylyltransferase subunit 2 (302 aa).

This sequence belongs to the PAPS reductase family. CysD subfamily. Heterodimer composed of CysD, the smaller subunit, and CysN.

It catalyses the reaction sulfate + ATP + H(+) = adenosine 5'-phosphosulfate + diphosphate. It functions in the pathway sulfur metabolism; hydrogen sulfide biosynthesis; sulfite from sulfate: step 1/3. Its function is as follows. With CysN forms the ATP sulfurylase (ATPS) that catalyzes the adenylation of sulfate producing adenosine 5'-phosphosulfate (APS) and diphosphate, the first enzymatic step in sulfur assimilation pathway. APS synthesis involves the formation of a high-energy phosphoric-sulfuric acid anhydride bond driven by GTP hydrolysis by CysN coupled to ATP hydrolysis by CysD. This Salmonella paratyphi A (strain AKU_12601) protein is Sulfate adenylyltransferase subunit 2.